The sequence spans 297 residues: Light-independent protochlorophyllide reductase iron-sulfur ATP-binding protein (297 aa).

ATP is bound by residues 41-46 (GIGKST) and Lys70. Ser45 is a binding site for Mg(2+). Residues Cys126 and Cys160 each contribute to the [4Fe-4S] cluster site. ATP is bound by residues 211 to 212 (NR) and 235 to 237 (PDL).

It belongs to the NifH/BchL/ChlL family. As to quaternary structure, homodimer. Protochlorophyllide reductase is composed of three subunits; BchL, BchN and BchB. [4Fe-4S] cluster serves as cofactor.

The enzyme catalyses chlorophyllide a + oxidized 2[4Fe-4S]-[ferredoxin] + 2 ADP + 2 phosphate = protochlorophyllide a + reduced 2[4Fe-4S]-[ferredoxin] + 2 ATP + 2 H2O. It functions in the pathway porphyrin-containing compound metabolism; bacteriochlorophyll biosynthesis (light-independent). Component of the dark-operative protochlorophyllide reductase (DPOR) that uses Mg-ATP and reduced ferredoxin to reduce ring D of protochlorophyllide (Pchlide) to form chlorophyllide a (Chlide). This reaction is light-independent. The L component serves as a unique electron donor to the NB-component of the complex, and binds Mg-ATP. The chain is Light-independent protochlorophyllide reductase iron-sulfur ATP-binding protein from Methylorubrum extorquens (strain CM4 / NCIMB 13688) (Methylobacterium extorquens).